The following is a 292-amino-acid chain: Acetylglutamate kinase (292 aa).

Substrate-binding positions include 64–65, R86, and N190; that span reads GG.

This sequence belongs to the acetylglutamate kinase family. ArgB subfamily.

It localises to the cytoplasm. It catalyses the reaction N-acetyl-L-glutamate + ATP = N-acetyl-L-glutamyl 5-phosphate + ADP. The protein operates within amino-acid biosynthesis; L-arginine biosynthesis; N(2)-acetyl-L-ornithine from L-glutamate: step 2/4. Functionally, catalyzes the ATP-dependent phosphorylation of N-acetyl-L-glutamate. The protein is Acetylglutamate kinase of Citrifermentans bemidjiense (strain ATCC BAA-1014 / DSM 16622 / JCM 12645 / Bem) (Geobacter bemidjiensis).